Here is a 170-residue protein sequence, read N- to C-terminus: Universal stress protein MJ0531 (170 aa).

This sequence belongs to the universal stress protein A family.

The chain is Universal stress protein MJ0531 from Methanocaldococcus jannaschii (strain ATCC 43067 / DSM 2661 / JAL-1 / JCM 10045 / NBRC 100440) (Methanococcus jannaschii).